The chain runs to 142 residues: Holo-[acyl-carrier-protein] synthase (142 aa).

The Mg(2+) site is built by aspartate 9 and glutamate 63.

This sequence belongs to the P-Pant transferase superfamily. AcpS family. Mg(2+) serves as cofactor.

It localises to the cytoplasm. The catalysed reaction is apo-[ACP] + CoA = holo-[ACP] + adenosine 3',5'-bisphosphate + H(+). Its function is as follows. Transfers the 4'-phosphopantetheine moiety from coenzyme A to a Ser of acyl-carrier-protein. The protein is Holo-[acyl-carrier-protein] synthase of Burkholderia lata (strain ATCC 17760 / DSM 23089 / LMG 22485 / NCIMB 9086 / R18194 / 383).